Reading from the N-terminus, the 560-residue chain is NAD-dependent malic enzyme (560 aa).

The Proton donor role is filled by Tyr100. NAD(+) is bound at residue Arg153. Lys171 functions as the Proton acceptor in the catalytic mechanism. A divalent metal cation-binding residues include Glu242, Asp243, and Asp266. Residues Asp266 and Asn413 each coordinate NAD(+).

The protein belongs to the malic enzymes family. Homotetramer. Mg(2+) serves as cofactor. Mn(2+) is required as a cofactor.

The enzyme catalyses (S)-malate + NAD(+) = pyruvate + CO2 + NADH. It carries out the reaction oxaloacetate + H(+) = pyruvate + CO2. This Psychrobacter cryohalolentis (strain ATCC BAA-1226 / DSM 17306 / VKM B-2378 / K5) protein is NAD-dependent malic enzyme.